A 162-amino-acid polypeptide reads, in one-letter code: Chemoreceptor glutamine deamidase CheD (162 aa).

This sequence belongs to the CheD family. Forms a complex with CheC.

The enzyme catalyses L-glutaminyl-[protein] + H2O = L-glutamyl-[protein] + NH4(+). Deamidates glutamine residues to glutamate on methyl-accepting chemotaxis receptors (MCPs). CheD-mediated MCP deamidation is required for productive communication of the conformational signals of the chemoreceptors to the CheA kinase. This is Chemoreceptor glutamine deamidase CheD from Halalkalibacterium halodurans (strain ATCC BAA-125 / DSM 18197 / FERM 7344 / JCM 9153 / C-125) (Bacillus halodurans).